We begin with the raw amino-acid sequence, 228 residues long: Protein 33K (228 aa).

Positions M1–P156 are disordered. Residues T15–D53 are compositionally biased toward acidic residues. Composition is skewed to low complexity over residues E54–P63 and A104–A119. A necessary for nuclear subcellular location region spans residues Y171–C198. Residues S177–S197 form an RS-repeat; required for splicing enhancer activity region.

This sequence belongs to the adenoviridae splicing factor family. Homooligomer. Interacts with DBP; this interaction occurs at a unique vertex during genome packaging. Interacts with IVa2; this interaction occurs at a unique vertex during genome packaging and seems to potentiate IVa2 and 33K oligomerization. Phosphorylated in vitro by human PKA and PRKDC. PRKDC inhibits, whereas PKA activates the splicing factor.

The protein resides in the host nucleus. Functionally, promotes alternative splicing of late transcripts by promoting splicing at weak 3' splice sites. Required for the temporal activation of major late pre-mRNA splicing at late times of infection. Induces the splicing and expression of the late capsid vertex protein. Its function is as follows. Probably functions as the small terminase that is part of the molecular motor that translocates genomic DNA in empty capsid during DNA packaging. This motor is located at a unique vertex and comprises at least the IVa2 ATPase, the small terminase 33K and probably a portal. Forms a ring-like structure of about 17 nm in which genomic DNA is translocated into the capsid. Stimulates IVa2 ATPase activity in the presence of the viral genome. Once the DNA is packaged, the terminase detaches: the 33K protein is present in the empty particles, but not in the mature virions. Also involved in virion assembly. This chain is Protein 33K, found in Homo sapiens (Human).